The primary structure comprises 519 residues: Cyclic AMP-responsive element-binding protein 3-like protein 2 (519 aa).

Topologically, residues 1–374 (MEIMDSGEPF…SCRVTGTQTS (374 aa)) are cytoplasmic. Disordered regions lie at residues 58–77 (GRGDAMDTEEELTRASPVPP), 85–121 (YSLCGDSRPQSPLSHLPGEPGSDAADSESDEWPMEQE), and 193–261 (GLEC…SGPL). Acidic residues predominate over residues 109-119 (ADSESDEWPME). 2 stretches are compositionally biased toward low complexity: residues 205–217 (SSVGSDSEGSQSP) and 240–249 (PSSLSSSPLL). Positions 291–354 (ALKKIRRKIK…KSLLQQLHSL (64 aa)) constitute a bZIP domain. The interval 293–322 (KKIRRKIKNKISAQESRRKKKEYVDALEKK) is basic motif. Residues 333–354 (LRRKVENLECTNKSLLQQLHSL) form a leucine-zipper region. A helical; Signal-anchor for type II membrane protein transmembrane segment spans residues 375–395 (TCLMVVVLCFSLFLGSFYPGL). Residues 396–519 (SPCSSITKAD…QLDRTVNETS (124 aa)) are Lumenal-facing. The short motif at 423–426 (RSLL) is the S1P recognition element. Residues Asn485, Asn503, and Asn516 are each glycosylated (N-linked (GlcNAc...) asparagine).

It belongs to the bZIP family. ATF subfamily. In terms of assembly, binds DNA as a dimer. Upon ER stress, translocated to the Golgi apparatus, where it is processed by regulated intramembrane proteolysis (RIP) to release the cytosol-facing N-terminal transcription factor domain. The cleavage is performed sequentially by site-1 and site-2 proteases (S1P/mbtps1 and S2P/mbtps2).

It localises to the endoplasmic reticulum membrane. The protein localises to the nucleus. Functionally, transcription factor involved in unfolded protein response (UPR). In the absence of endoplasmic reticulum (ER) stress, inserted into ER membranes, with N-terminal DNA-binding and transcription activation domains oriented toward the cytosolic face of the membrane. In response to ER stress, transported to the Golgi, where it is cleaved in a site-specific manner by resident proteases S1P/mbtps1 and S2P/mbtps2. The released N-terminal cytosolic domain is translocated to the nucleus to effect transcription of specific target genes. Plays a critical role in chondrogenesis. May protect neuroblastoma cells from ER stress-induced death. In vitro activates transcription of target genes via direct binding to the CRE site. The chain is Cyclic AMP-responsive element-binding protein 3-like protein 2 (creb3l2) from Danio rerio (Zebrafish).